The sequence spans 151 residues: Transcriptional repressor NrdR (151 aa).

Residues 3–34 fold into a zinc finger; it reads CPFCNSVDTSVKNSRPSDCKMSVRRRRSCDSC. An ATP-cone domain is found at 49–139; it reads VKVLKKDGSV…VYMNFSDVND (91 aa).

This sequence belongs to the NrdR family. The cofactor is Zn(2+).

Negatively regulates transcription of bacterial ribonucleotide reductase nrd genes and operons by binding to NrdR-boxes. In Anaplasma marginale (strain Florida), this protein is Transcriptional repressor NrdR.